We begin with the raw amino-acid sequence, 152 residues long: Glutaredoxin-related protein 5, mitochondrial (152 aa).

The transit peptide at 1 to 31 directs the protein to the mitochondrion; it reads MSASLSRAAAALLRWGRSAGGGGLPGAGVRA. Residues 38 to 141 enclose the Glutaredoxin domain; the sequence is AEQLDALVKK…EELKKLGIRS (104 aa). Lysine 55 is a glutathione binding site. At lysine 55 the chain carries N6-succinyllysine. Cysteine 63 lines the [2Fe-2S] cluster pocket. Residues 93 to 97, isoleucine 105, and 118 to 119 each bind glutathione; these read RQGIK and CD. The residue at position 151 (serine 151) is a Phosphoserine.

It belongs to the glutaredoxin family. Monothiol subfamily. In terms of assembly, homodimer. Interacts with ISCU. Interacts with BOLA1. Detected in bone, liver, muscle and kidney.

It localises to the mitochondrion matrix. In terms of biological role, monothiol glutaredoxin involved in mitochondrial iron-sulfur (Fe/S) cluster transfer. Receives 2Fe/2S clusters from scaffold protein ISCU and mediates their transfer to apoproteins, to the 4Fe/FS cluster biosynthesis machinery, or export from mitochondrion. Required for normal regulation of hemoglobin synthesis by the iron-sulfur protein ACO1. This Mus musculus (Mouse) protein is Glutaredoxin-related protein 5, mitochondrial (Glrx5).